A 255-amino-acid polypeptide reads, in one-letter code: NADH dehydrogenase [ubiquinone] flavoprotein 2, mitochondrial (255 aa).

The transit peptide at 1–35 (MLARLAAKRLLEIRQVFRQPTSQVTRSLSTALNYH) directs the protein to the mitochondrion. The [2Fe-2S] cluster site is built by cysteine 130, cysteine 135, cysteine 171, and cysteine 175. A disordered region spans residues 214-255 (RKGEKPPHGTQNPKRIKCGPEGGNKTLLGEPKPPQFRDLDAC).

This sequence belongs to the complex I 24 kDa subunit family. In terms of assembly, complex I is composed of at least 49 different subunits. This is a component of the flavoprotein-sulfur (FP) fragment of the enzyme. [2Fe-2S] cluster is required as a cofactor.

The protein resides in the mitochondrion inner membrane. The catalysed reaction is a ubiquinone + NADH + 5 H(+)(in) = a ubiquinol + NAD(+) + 4 H(+)(out). Its function is as follows. Core subunit of the mitochondrial membrane respiratory chain NADH dehydrogenase (Complex I) that is believed to belong to the minimal assembly required for catalysis. Complex I functions in the transfer of electrons from NADH to the respiratory chain. The immediate electron acceptor for the enzyme is believed to be ubiquinone. This is NADH dehydrogenase [ubiquinone] flavoprotein 2, mitochondrial from Arabidopsis thaliana (Mouse-ear cress).